A 219-amino-acid polypeptide reads, in one-letter code: Clathrin light chain (219 aa).

The tract at residues 32 to 136 (AEITGGSASA…KKEELRQQSK (105 aa)) is disordered. Positions 96-158 (PPPSREEPEK…SISKTKLASR (63 aa)) are involved in binding clathrin heavy chain. The span at 99–136 (SREEPEKIRKWREEQKQRLEEKDIEEERKKEELRQQSK) shows a compositional bias: basic and acidic residues.

This sequence belongs to the clathrin light chain family. As to quaternary structure, clathrin coats are formed from molecules containing 3 heavy chains and 3 light chains.

Its subcellular location is the cytoplasmic vesicle membrane. The protein localises to the membrane. It localises to the coated pit. Its function is as follows. Clathrin is the major protein of the polyhedral coat of coated pits and vesicles. This Drosophila melanogaster (Fruit fly) protein is Clathrin light chain (Clc).